The primary structure comprises 493 residues: Glutamyl-tRNA(Gln) amidotransferase subunit A (493 aa).

Catalysis depends on charge relay system residues Lys-78 and Ser-158. The active-site Acyl-ester intermediate is the Ser-182.

This sequence belongs to the amidase family. GatA subfamily. Heterotrimer of A, B and C subunits.

It carries out the reaction L-glutamyl-tRNA(Gln) + L-glutamine + ATP + H2O = L-glutaminyl-tRNA(Gln) + L-glutamate + ADP + phosphate + H(+). Allows the formation of correctly charged Gln-tRNA(Gln) through the transamidation of misacylated Glu-tRNA(Gln) in organisms which lack glutaminyl-tRNA synthetase. The reaction takes place in the presence of glutamine and ATP through an activated gamma-phospho-Glu-tRNA(Gln). This is Glutamyl-tRNA(Gln) amidotransferase subunit A from Beijerinckia indica subsp. indica (strain ATCC 9039 / DSM 1715 / NCIMB 8712).